Consider the following 217-residue polypeptide: 3,4-dihydroxy-2-butanone 4-phosphate synthase (217 aa).

D-ribulose 5-phosphate is bound by residues 37–38 (RE), D42, 150–154 (RGGHT), and E174. Residue E38 participates in Mg(2+) binding. H153 contributes to the Mg(2+) binding site.

This sequence belongs to the DHBP synthase family. Homodimer. The cofactor is Mg(2+). Mn(2+) is required as a cofactor.

The enzyme catalyses D-ribulose 5-phosphate = (2S)-2-hydroxy-3-oxobutyl phosphate + formate + H(+). It participates in cofactor biosynthesis; riboflavin biosynthesis; 2-hydroxy-3-oxobutyl phosphate from D-ribulose 5-phosphate: step 1/1. Functionally, catalyzes the conversion of D-ribulose 5-phosphate to formate and 3,4-dihydroxy-2-butanone 4-phosphate. The sequence is that of 3,4-dihydroxy-2-butanone 4-phosphate synthase from Pectobacterium atrosepticum (strain SCRI 1043 / ATCC BAA-672) (Erwinia carotovora subsp. atroseptica).